We begin with the raw amino-acid sequence, 453 residues long: tRNA modification GTPase MnmE (453 aa).

Residues R22, E79, and K119 each contribute to the (6S)-5-formyl-5,6,7,8-tetrahydrofolate site. The region spanning 215 to 376 (GMKVVIAGRP…LKQHLKSLMG (162 aa)) is the TrmE-type G domain. N225 contributes to the K(+) binding site. GTP contacts are provided by residues 225–230 (NAGKSS), 244–250 (TDIAGTT), 269–272 (DTAG), and 334–337 (NKAD). A Mg(2+)-binding site is contributed by S229. K(+) contacts are provided by T244, I246, and T249. Residue T250 coordinates Mg(2+). K453 lines the (6S)-5-formyl-5,6,7,8-tetrahydrofolate pocket.

This sequence belongs to the TRAFAC class TrmE-Era-EngA-EngB-Septin-like GTPase superfamily. TrmE GTPase family. As to quaternary structure, homodimer. Heterotetramer of two MnmE and two MnmG subunits. K(+) serves as cofactor.

Its subcellular location is the cytoplasm. In terms of biological role, exhibits a very high intrinsic GTPase hydrolysis rate. Involved in the addition of a carboxymethylaminomethyl (cmnm) group at the wobble position (U34) of certain tRNAs, forming tRNA-cmnm(5)s(2)U34. This is tRNA modification GTPase MnmE from Shewanella amazonensis (strain ATCC BAA-1098 / SB2B).